We begin with the raw amino-acid sequence, 200 residues long: Putative pseudouridine methyltransferase (200 aa).

Positions 133 and 187 each coordinate S-adenosyl-L-methionine.

It belongs to the methyltransferase superfamily. TrmY family.

Its subcellular location is the cytoplasm. This Alcanivorax borkumensis (strain ATCC 700651 / DSM 11573 / NCIMB 13689 / SK2) protein is Putative pseudouridine methyltransferase.